Reading from the N-terminus, the 341-residue chain is Phosphate acyltransferase (341 aa).

It belongs to the PlsX family. As to quaternary structure, homodimer. Probably interacts with PlsY.

The protein resides in the cytoplasm. It carries out the reaction a fatty acyl-[ACP] + phosphate = an acyl phosphate + holo-[ACP]. It participates in lipid metabolism; phospholipid metabolism. In terms of biological role, catalyzes the reversible formation of acyl-phosphate (acyl-PO(4)) from acyl-[acyl-carrier-protein] (acyl-ACP). This enzyme utilizes acyl-ACP as fatty acyl donor, but not acyl-CoA. The protein is Phosphate acyltransferase of Aliivibrio fischeri (strain ATCC 700601 / ES114) (Vibrio fischeri).